The chain runs to 342 residues: Ferredoxin--NADP reductase (342 aa).

FAD contacts are provided by cysteine 17, aspartate 36, glutamine 44, tyrosine 49, valine 89, phenylalanine 124, aspartate 289, and threonine 330.

This sequence belongs to the ferredoxin--NADP reductase type 2 family. Homodimer. The cofactor is FAD.

The enzyme catalyses 2 reduced [2Fe-2S]-[ferredoxin] + NADP(+) + H(+) = 2 oxidized [2Fe-2S]-[ferredoxin] + NADPH. This is Ferredoxin--NADP reductase from Bradyrhizobium sp. (strain ORS 278).